The chain runs to 78 residues: Large ribosomal subunit protein bL28 (78 aa).

Residues 1-21 (MSRVCQVTGKKPMVGNNRSHA) form a disordered region.

The protein belongs to the bacterial ribosomal protein bL28 family.

The sequence is that of Large ribosomal subunit protein bL28 from Shewanella loihica (strain ATCC BAA-1088 / PV-4).